We begin with the raw amino-acid sequence, 167 residues long: ATP synthase subunit b (167 aa).

A helical transmembrane segment spans residues phenylalanine 15–methionine 37.

Belongs to the ATPase B chain family. In terms of assembly, F-type ATPases have 2 components, F(1) - the catalytic core - and F(0) - the membrane proton channel. F(1) has five subunits: alpha(3), beta(3), gamma(1), delta(1), epsilon(1). F(0) has three main subunits: a(1), b(2) and c(10-14). The alpha and beta chains form an alternating ring which encloses part of the gamma chain. F(1) is attached to F(0) by a central stalk formed by the gamma and epsilon chains, while a peripheral stalk is formed by the delta and b chains.

It is found in the cell inner membrane. Its function is as follows. F(1)F(0) ATP synthase produces ATP from ADP in the presence of a proton or sodium gradient. F-type ATPases consist of two structural domains, F(1) containing the extramembraneous catalytic core and F(0) containing the membrane proton channel, linked together by a central stalk and a peripheral stalk. During catalysis, ATP synthesis in the catalytic domain of F(1) is coupled via a rotary mechanism of the central stalk subunits to proton translocation. In terms of biological role, component of the F(0) channel, it forms part of the peripheral stalk, linking F(1) to F(0). This Cytophaga hutchinsonii (strain ATCC 33406 / DSM 1761 / CIP 103989 / NBRC 15051 / NCIMB 9469 / D465) protein is ATP synthase subunit b.